A 657-amino-acid polypeptide reads, in one-letter code: tRNA uridine 5-carboxymethylaminomethyl modification enzyme MnmG (657 aa).

FAD is bound at residue 13 to 18 (GGGHAG). 281 to 295 (GPRYCPSVEDKINRF) serves as a coordination point for NAD(+).

It belongs to the MnmG family. Homodimer. Heterotetramer of two MnmE and two MnmG subunits. FAD serves as cofactor.

The protein localises to the cytoplasm. NAD-binding protein involved in the addition of a carboxymethylaminomethyl (cmnm) group at the wobble position (U34) of certain tRNAs, forming tRNA-cmnm(5)s(2)U34. This Acidovorax ebreus (strain TPSY) (Diaphorobacter sp. (strain TPSY)) protein is tRNA uridine 5-carboxymethylaminomethyl modification enzyme MnmG.